A 155-amino-acid chain; its full sequence is Ribosomal RNA large subunit methyltransferase H 1 (155 aa).

Residues Leu-76, Gly-108, and 127–132 each bind S-adenosyl-L-methionine; that span reads FSKMTF.

The protein belongs to the RNA methyltransferase RlmH family. Homodimer.

The protein resides in the cytoplasm. It catalyses the reaction pseudouridine(1915) in 23S rRNA + S-adenosyl-L-methionine = N(3)-methylpseudouridine(1915) in 23S rRNA + S-adenosyl-L-homocysteine + H(+). Functionally, specifically methylates the pseudouridine at position 1915 (m3Psi1915) in 23S rRNA. The protein is Ribosomal RNA large subunit methyltransferase H 1 of Thermoanaerobacter pseudethanolicus (strain ATCC 33223 / 39E) (Clostridium thermohydrosulfuricum).